Reading from the N-terminus, the 1429-residue chain is uncharacterized protein (1429 aa).

Disordered regions lie at residues 1–76 and 103–130; these read MEGE…SGIE and PAGA…AGEK. The span at 14–29 shows a compositional bias: low complexity; that stretch reads SHSTSVVSERASSSGV. Over residues 109–121 the composition is skewed to polar residues; the sequence is SAQNANLISSKSE. Transmembrane regions (helical) follow at residues 197–217 and 225–245; these read LTGQ…LSWI and FFIL…CMIS. Residues 266–471 form the SMP-LTD domain; sequence DYETMSWFNT…WPNMFDYDLS (206 aa). C2 domains are found at residues 462 to 584 and 738 to 858; these read WPNM…GDIY and TPVD…DRSA. Positions 899–932 are disordered; the sequence is NTDNSSKQSSENVQSATDPTTPAKDNSTSNAETS. A C2 3 domain is found at 1060–1177; sequence TYMPVPMTLN…EPNVESQQSI (118 aa). Residues 1280–1303 form a disordered region; the sequence is EKNPSRSDLTTTQEASSSASVPPA. Positions 1294–1303 are enriched in low complexity; it reads ASSSASVPPA.

Its subcellular location is the membrane. This is an uncharacterized protein from Schizosaccharomyces pombe (strain 972 / ATCC 24843) (Fission yeast).